The chain runs to 883 residues: Alanine--tRNA ligase (883 aa).

Residues histidine 560, histidine 564, cysteine 665, and histidine 669 each contribute to the Zn(2+) site.

Belongs to the class-II aminoacyl-tRNA synthetase family. The cofactor is Zn(2+).

It localises to the cytoplasm. It catalyses the reaction tRNA(Ala) + L-alanine + ATP = L-alanyl-tRNA(Ala) + AMP + diphosphate. Functionally, catalyzes the attachment of alanine to tRNA(Ala) in a two-step reaction: alanine is first activated by ATP to form Ala-AMP and then transferred to the acceptor end of tRNA(Ala). Also edits incorrectly charged Ser-tRNA(Ala) and Gly-tRNA(Ala) via its editing domain. This is Alanine--tRNA ligase from Mesomycoplasma hyopneumoniae (strain J / ATCC 25934 / NCTC 10110) (Mycoplasma hyopneumoniae).